The primary structure comprises 105 residues: Large ribosomal subunit protein uL24 (105 aa).

The protein belongs to the universal ribosomal protein uL24 family. In terms of assembly, part of the 50S ribosomal subunit.

Functionally, one of two assembly initiator proteins, it binds directly to the 5'-end of the 23S rRNA, where it nucleates assembly of the 50S subunit. One of the proteins that surrounds the polypeptide exit tunnel on the outside of the subunit. This chain is Large ribosomal subunit protein uL24, found in Francisella tularensis subsp. tularensis (strain FSC 198).